A 97-amino-acid polypeptide reads, in one-letter code: MFKLICIVFIATILSITSAADNEDELTIEDFLSYECNESMDIEELKEKDKVCSRCANLHKTQSVIERCRLNCFTSEYFKNCEDNLQAKEEEPEEETL.

The N-terminal stretch at 1–19 is a signal peptide; it reads MFKLICIVFIATILSITSA. Intrachain disulfides connect Cys36–Cys72, Cys52–Cys68, and Cys55–Cys81.

It belongs to the arthropod CHH/MIH/GIH/VIH hormone family. In terms of tissue distribution, expressed by the venom gland.

The protein localises to the secreted. Functionally, may increase the toxicity of alpha-latrotoxin and/or other venom components. Is non-toxic to mice and to the cockroach Periplaneta americana. The chain is Alpha-latrotoxin associated low molecular weight protein 2 from Steatoda grossa (False black widow).